A 127-amino-acid chain; its full sequence is Fumarate reductase subunit C (127 aa).

Transmembrane regions (helical) follow at residues Ala-30–Val-50, Ile-67–Phe-87, and Val-107–Val-127.

Belongs to the FrdC family. In terms of assembly, part of an enzyme complex containing four subunits: a flavoprotein (FrdA), an iron-sulfur protein (FrdB), and two hydrophobic anchor proteins (FrdC and FrdD).

The protein resides in the cell inner membrane. Its function is as follows. Anchors the catalytic components of the fumarate reductase complex to the cell membrane, binds quinones. The sequence is that of Fumarate reductase subunit C from Aliivibrio fischeri (strain ATCC 700601 / ES114) (Vibrio fischeri).